We begin with the raw amino-acid sequence, 274 residues long: Protein YehF (274 aa).

Residues 2–78 form the WGR domain; the sequence is RHFIYQDEKS…KDNSLQPSQT (77 aa).

Functionally, has been implicated in selenate reduction; a mini-Tn10 insertion mutant in 'molR', (which was mapped to 47.3 centisomes i.e. this locus), is defective in the reduction of selenate. The sequence is that of Protein YehF (yehF) from Escherichia coli (strain K12).